The chain runs to 224 residues: Biotin transport ATP-binding protein BioM (224 aa).

In terms of domain architecture, ABC transporter spans 3 to 224 (IQFESAGVSF…AIARYREIAA (222 aa)). Position 34-41 (34-41 (GLNGSGKT)) interacts with ATP.

The protein belongs to the ABC transporter superfamily. Part of a biotin transporter complex composed of BioM, BioN and BioY.

Its subcellular location is the cell inner membrane. Its function is as follows. Involved in biotin uptake. This Rhizobium etli (strain ATCC 51251 / DSM 11541 / JCM 21823 / NBRC 15573 / CFN 42) protein is Biotin transport ATP-binding protein BioM (bioM).